The following is a 65-amino-acid chain: uncharacterized protein (65 aa).

To E.coli YjiX.

This is an uncharacterized protein from Escherichia coli O6:H1 (strain CFT073 / ATCC 700928 / UPEC).